The primary structure comprises 284 residues: Asialoglycoprotein receptor 1 (284 aa).

Topologically, residues Met1–Arg39 are cytoplasmic. The Endocytosis signal motif lies at Tyr5–Phe8. The S-palmitoyl cysteine moiety is linked to residue Cys35. Residues Leu40–Ser60 form a helical; Signal-anchor for type II membrane protein membrane-spanning segment. Residues Ile58 to Leu122 adopt a coiled-coil conformation. Residues Gln61–Asn284 are Extracellular-facing. N-linked (GlcNAc...) asparagine glycans are attached at residues Asn75, Asn78, and Asn146. Cystine bridges form between Cys153–Cys164, Cys181–Cys276, and Cys254–Cys268. Positions Tyr160 to Glu277 constitute a C-type lectin domain. Ca(2+) is bound by residues Val190, Glu196, Asp215, Gln239, Asp241, Asp242, Glu252, Asp253, Asn264, Asp265, and Glu277.

In terms of assembly, interacts with LASS2. In terms of processing, phosphorylated on a cytoplasmic Ser residue. As to expression, expressed exclusively in hepatic parenchymal cells.

It localises to the membrane. In terms of biological role, mediates the endocytosis of plasma glycoproteins to which the terminal sialic acid residue on their complex carbohydrate moieties has been removed. The receptor recognizes terminal galactose and N-acetylgalactosamine units. After ligand binding to the receptor, the resulting complex is internalized and transported to a sorting organelle, where receptor and ligand are disassociated. The receptor then returns to the cell membrane surface. The polypeptide is Asialoglycoprotein receptor 1 (Asgr1) (Rattus norvegicus (Rat)).